A 315-amino-acid polypeptide reads, in one-letter code: Protease HtpX homolog (315 aa).

Residues 16–36 form a helical membrane-spanning segment; sequence LFMGIGYLIGGASGALIALVV. Position 130 (His-130) interacts with Zn(2+). The active site involves Glu-131. His-134 contributes to the Zn(2+) binding site. 2 consecutive transmembrane segments (helical) span residues 145 to 165 and 172 to 192; these read ITAT…FFGG and GPGL…AMLV. Glu-201 is a binding site for Zn(2+). The tract at residues 282-315 is disordered; that stretch reads GGGGASIGRPAGPSPRGAPRSPWSGQPRARGPWG. The span at 288–303 shows a compositional bias: low complexity; the sequence is IGRPAGPSPRGAPRSP.

Belongs to the peptidase M48B family. Zn(2+) is required as a cofactor.

The protein localises to the cell inner membrane. The protein is Protease HtpX homolog of Rhodopseudomonas palustris (strain BisB5).